We begin with the raw amino-acid sequence, 707 residues long: ATP-dependent RNA helicase DHX33 (707 aa).

A disordered region spans residues 1 to 64 (MPEEAGFPPA…LAQPSASPYP (64 aa)). Positions 1 to 80 (MPEEAGFPPA…RRSLPIFQAR (80 aa)) are required for nucleolar location. The segment covering 39–49 (GSGGRGGGGGR) has biased composition (gly residues). Over residues 50-64 (RQQPPLAQPSASPYP) the composition is skewed to low complexity. In terms of domain architecture, Helicase ATP-binding spans 84 to 252 (LAQLRNLDNA…FNGAPVLYLE (169 aa)). An ATP-binding site is contributed by 97 to 104 (GETGSGKT). A DEAH box motif is present at residues 194-197 (DEAH). The Helicase C-terminal domain maps to 277–450 (SVFQIHQEAP…SVMLQLLAMK (174 aa)). Residues 471-562 (AIAQLDLLGA…ISSEGDHMTL (92 aa)) form an HA2; required for interaction with EIF3G and RPL26 region. Residues 547-558 (GVRKKFISSEGD) carry the Critical for rDNA-binding motif.

Belongs to the DEAD box helicase family. DEAH subfamily. As to quaternary structure, interacts with UBTF. Interacts with DDX3X, EIF3G and EIF3H; the interaction is independent of RNA. Interacts (via HA2 region and Helicase C-terminal domain) with the components of the large ribosomal subunit RPL3, RPL7, RPL26 and RPL27. Interacts (via DEAH box) with NLRP3 (via NACHT domain). Binds to mRNA. Binds to double-stranded RNA (via the helicase C-terminal domain). Interacts (via the helicase C-terminal domain) with MAVS. Ubiquitinated, leading to its degradation by the proteasome. Deubiquitinated by USP36.

The protein resides in the nucleus. Its subcellular location is the nucleolus. It is found in the nucleoplasm. The protein localises to the cytoplasm. It localises to the inflammasome. It carries out the reaction ATP + H2O = ADP + phosphate + H(+). Functionally, implicated in nucleolar organization, ribosome biogenesis, protein synthesis and cytoplasmic dsRNA sensing. Stimulates RNA polymerase I transcription of the 47S precursor rRNA. Associates with ribosomal DNA (rDNA) loci where it is involved in POLR1A recruitment. In the cytoplasm, promotes elongation-competent 80S ribosome assembly at the late stage of mRNA translation initiation. Senses cytosolic dsRNA mediating NLRP3 inflammasome formation in macrophages and type I interferon production in myeloid dendritic cells. Required for NLRP3 activation induced by viral dsRNA and bacterial RNA. In dendritic cells, required for induction of type I interferon production induced by cytoplasmic dsRNA via the activation of MAPK and NF-kappa-B signaling pathways. This is ATP-dependent RNA helicase DHX33 from Homo sapiens (Human).